A 360-amino-acid polypeptide reads, in one-letter code: D-xylose 1-dehydrogenase [NADP(+)] (360 aa).

The protein belongs to the Gfo/Idh/MocA family. As to quaternary structure, homotretramer.

It carries out the reaction D-xylofuranose + NADP(+) = D-xylono-1,4-lactone + NADPH + H(+). NADP-dependent D-xylose dehydrogenase involved in the degradation of D-xylose, a major component of hemicelluloses such as xylan. In addition to D-xylose, oxidizes D-ribose at similar kinetic constants, whereas D-glucose is oxidized with about 70-fold lower catalytic efficiency. This Haloarcula marismortui (strain ATCC 43049 / DSM 3752 / JCM 8966 / VKM B-1809) (Halobacterium marismortui) protein is D-xylose 1-dehydrogenase [NADP(+)] (gfo6).